A 300-amino-acid polypeptide reads, in one-letter code: Ribosomal RNA small subunit methyltransferase H (300 aa).

S-adenosyl-L-methionine is bound by residues 33–35 (GGH), Asp53, Phe78, Asp97, and Gln104.

The protein belongs to the methyltransferase superfamily. RsmH family.

The protein localises to the cytoplasm. It carries out the reaction cytidine(1402) in 16S rRNA + S-adenosyl-L-methionine = N(4)-methylcytidine(1402) in 16S rRNA + S-adenosyl-L-homocysteine + H(+). Functionally, specifically methylates the N4 position of cytidine in position 1402 (C1402) of 16S rRNA. The polypeptide is Ribosomal RNA small subunit methyltransferase H (Karelsulcia muelleri (strain GWSS) (Sulcia muelleri)).